We begin with the raw amino-acid sequence, 217 residues long: MVSSVAPPPEKMMFQLSLRRRGISDRAVLQAMEAVPRDRFVDPVHRDGAWRDTALPIACGQTISQPFVVAYMTEQLRLEAGHRLLEIGTGSGYHAAVLSRLVRDVVSVERFKTLADRARARLKELNYANVEVLLGDGFAIPEGAGTFDRIIVTAAMTELSQPLLDLLDPGGILIAPIGPANGRQTLIRVERKDDDFIRKALVDVRFVPALTGIAREL.

S64 is an active-site residue.

The protein belongs to the methyltransferase superfamily. L-isoaspartyl/D-aspartyl protein methyltransferase family.

It is found in the cytoplasm. The enzyme catalyses [protein]-L-isoaspartate + S-adenosyl-L-methionine = [protein]-L-isoaspartate alpha-methyl ester + S-adenosyl-L-homocysteine. In terms of biological role, catalyzes the methyl esterification of L-isoaspartyl residues in peptides and proteins that result from spontaneous decomposition of normal L-aspartyl and L-asparaginyl residues. It plays a role in the repair and/or degradation of damaged proteins. In Rhodopseudomonas palustris (strain BisB5), this protein is Protein-L-isoaspartate O-methyltransferase.